A 606-amino-acid polypeptide reads, in one-letter code: NADH-ubiquinone oxidoreductase chain 5 (606 aa).

16 consecutive transmembrane segments (helical) span residues 1–21 (MNIF…PIIA), 38–58 (NIIS…IYSG), 87–107 (MIFV…SIWY), 114–134 (ITQF…LVTA), 140–160 (LFIG…WWYG), 171–191 (AILY…WFLS), 213–233 (LMGL…HPWL), 241–261 (TPVS…FLLI), 273–293 (AQTL…ICAL), 301–320 (IIAF…IGIN), 325–347 (AFLH…GSII), 366–386 (MPFT…MPFL), 409–429 (LLMT…MIFF), 457–477 (LLIG…PTTT), 488–508 (LMAL…SLAT), and 582–602 (GLIK…LLLL).

It belongs to the complex I subunit 5 family. Core subunit of respiratory chain NADH dehydrogenase (Complex I) which is composed of 45 different subunits.

The protein localises to the mitochondrion inner membrane. It catalyses the reaction a ubiquinone + NADH + 5 H(+)(in) = a ubiquinol + NAD(+) + 4 H(+)(out). In terms of biological role, core subunit of the mitochondrial membrane respiratory chain NADH dehydrogenase (Complex I) which catalyzes electron transfer from NADH through the respiratory chain, using ubiquinone as an electron acceptor. Essential for the catalytic activity and assembly of complex I. The chain is NADH-ubiquinone oxidoreductase chain 5 (MT-ND5) from Rhinoceros unicornis (Greater Indian rhinoceros).